The primary structure comprises 343 residues: MIKLTSLVKAAGUAAKLGPAGLEDALSGILGKGDDPNLLVGPETADDAGVYRIGEGLALVDTVDIITPLVDDPFTFGRIAAANALSDVYAMGGRPVTAMNLAFFPACTLPGQILADIMAGGLDAVREAGACLVGGHTVEDHELKYGLSVTGLISPGRIVRNSTARPGDRLILTKPLGTGIVSTAIKADMVAPGVVDEAIRWMALLNASAAGLMLECEASACTDVTGFGLLGHACEMARGAGVTLEIALDAVPLMGGVEDLVADGLVPAGCYRNRDHYTPLVSVSAGAGGRLIPLFDPQTSGGLLITLSPQFADSFLSMARDRGLFAVAVGGVLPPREHAVVIA.

U13 is an active-site residue. Residue U13 is a non-standard amino acid, selenocysteine. Residues K16 and 44–46 (TAD) contribute to the ATP site. A Mg(2+)-binding site is contributed by D47. Residues D64, D87, and 135–137 (GHT) contribute to the ATP site. D87 lines the Mg(2+) pocket. D223 contacts Mg(2+).

This sequence belongs to the selenophosphate synthase 1 family. Class I subfamily. In terms of assembly, homodimer. Mg(2+) is required as a cofactor.

It carries out the reaction hydrogenselenide + ATP + H2O = selenophosphate + AMP + phosphate + 2 H(+). Synthesizes selenophosphate from selenide and ATP. The protein is Selenide, water dikinase of Geobacter metallireducens (strain ATCC 53774 / DSM 7210 / GS-15).